The sequence spans 31 residues: Conotoxin Cltx-2 (31 aa).

Proline 6 and proline 31 each carry 4-hydroxyproline.

In terms of processing, contains 4 disulfide bonds. Expressed by the venom duct.

The protein resides in the secreted. This chain is Conotoxin Cltx-2, found in Californiconus californicus (California cone).